We begin with the raw amino-acid sequence, 608 residues long: Centromere DNA-binding protein complex CBF3 subunit B (608 aa).

Residues 14 to 42 (CSVCTRRKVKCDRMIPCGNCRKRGQDSEC) constitute a DNA-binding region (zn(2)-C6 fungal-type). At Ser575 the chain carries Phosphoserine.

Component of the CBF3 copmplex, which is formed of CBF3A/CBF2, CBF3B/CEP3, CBF3C/CTF13 and CBF3D.

It localises to the nucleus. The protein localises to the chromosome. The protein resides in the centromere. Acts as a component of the centromere DNA-binding protein complex CBF3, which is essential for chromosome segregation and movement of centromeres along microtubules. CBF3 is required for the recruitment of other kinetochore complexes to CEN DNA. It plays a role in the attachment of chromosomes to the spindle and binds selectively to a highly conserved DNA sequence called CDEIII, found in centromers and in several promoters. The polypeptide is Centromere DNA-binding protein complex CBF3 subunit B (CEP3) (Saccharomyces cerevisiae (strain ATCC 204508 / S288c) (Baker's yeast)).